The sequence spans 105 residues: Thioredoxin-like protein slr0233 (105 aa).

Positions 1–102 (MAVKKQFANF…QAAQLIQQLQ (102 aa)) constitute a Thioredoxin domain. An intrachain disulfide couples cysteine 30 to cysteine 33.

The protein belongs to the thioredoxin family.

The sequence is that of Thioredoxin-like protein slr0233 from Synechocystis sp. (strain ATCC 27184 / PCC 6803 / Kazusa).